We begin with the raw amino-acid sequence, 304 residues long: Lipoyl synthase (304 aa).

[4Fe-4S] cluster is bound by residues C41, C46, C52, C68, C72, C75, and S281. The 217-residue stretch at 54-270 folds into the Radical SAM core domain; that stretch reads GARRTATFMI…RKIAMEKGFK (217 aa). Positions 282–304 are disordered; sequence YHADEQVNEAAKEKQRQGEEQLN.

It belongs to the radical SAM superfamily. Lipoyl synthase family. Requires [4Fe-4S] cluster as cofactor.

It localises to the cytoplasm. The enzyme catalyses [[Fe-S] cluster scaffold protein carrying a second [4Fe-4S](2+) cluster] + N(6)-octanoyl-L-lysyl-[protein] + 2 oxidized [2Fe-2S]-[ferredoxin] + 2 S-adenosyl-L-methionine + 4 H(+) = [[Fe-S] cluster scaffold protein] + N(6)-[(R)-dihydrolipoyl]-L-lysyl-[protein] + 4 Fe(3+) + 2 hydrogen sulfide + 2 5'-deoxyadenosine + 2 L-methionine + 2 reduced [2Fe-2S]-[ferredoxin]. The protein operates within protein modification; protein lipoylation via endogenous pathway; protein N(6)-(lipoyl)lysine from octanoyl-[acyl-carrier-protein]. In terms of biological role, catalyzes the radical-mediated insertion of two sulfur atoms into the C-6 and C-8 positions of the octanoyl moiety bound to the lipoyl domains of lipoate-dependent enzymes, thereby converting the octanoylated domains into lipoylated derivatives. This Staphylococcus epidermidis (strain ATCC 35984 / DSM 28319 / BCRC 17069 / CCUG 31568 / BM 3577 / RP62A) protein is Lipoyl synthase.